The following is a 589-amino-acid chain: Serine/threonine-protein kinase shk2 (589 aa).

Positions 23-125 (GIIRSGWVML…WMDLISSRAL (103 aa)) constitute a PH domain. The CRIB domain maps to 129–142 (VSSPMNPKHQVHVG). A Protein kinase domain is found at 309 to 566 (FNVKHKLGQG…AAELLTHSFL (258 aa)). ATP-binding positions include 315 to 323 (LGQGASGSV) and K343. Residue D434 is the Proton acceptor of the active site.

This sequence belongs to the protein kinase superfamily. STE Ser/Thr protein kinase family. STE20 subfamily.

The catalysed reaction is L-seryl-[protein] + ATP = O-phospho-L-seryl-[protein] + ADP + H(+). It catalyses the reaction L-threonyl-[protein] + ATP = O-phospho-L-threonyl-[protein] + ADP + H(+). Functionally, forms an activated complex with GTP-bound Ras-like cdc42. Participates in Ras-dependent morphological control and mating response pathways. The sequence is that of Serine/threonine-protein kinase shk2 (shk2) from Schizosaccharomyces pombe (strain 972 / ATCC 24843) (Fission yeast).